We begin with the raw amino-acid sequence, 261 residues long: Thiazole synthase (261 aa).

The active-site Schiff-base intermediate with DXP is the Lys-98. 1-deoxy-D-xylulose 5-phosphate contacts are provided by residues Gly-159, 185–186 (AG), and 207–208 (AS).

This sequence belongs to the ThiG family. In terms of assembly, homotetramer. Forms heterodimers with either ThiH or ThiS.

Its subcellular location is the cytoplasm. It carries out the reaction [ThiS sulfur-carrier protein]-C-terminal-Gly-aminoethanethioate + 2-iminoacetate + 1-deoxy-D-xylulose 5-phosphate = [ThiS sulfur-carrier protein]-C-terminal Gly-Gly + 2-[(2R,5Z)-2-carboxy-4-methylthiazol-5(2H)-ylidene]ethyl phosphate + 2 H2O + H(+). It functions in the pathway cofactor biosynthesis; thiamine diphosphate biosynthesis. Its function is as follows. Catalyzes the rearrangement of 1-deoxy-D-xylulose 5-phosphate (DXP) to produce the thiazole phosphate moiety of thiamine. Sulfur is provided by the thiocarboxylate moiety of the carrier protein ThiS. In vitro, sulfur can be provided by H(2)S. The polypeptide is Thiazole synthase (Mycobacterium leprae (strain Br4923)).